The primary structure comprises 252 residues: GPI alpha-1,4-mannosyltransferase I, stabilizing subunit (252 aa).

A signal peptide spans 1-22; the sequence is MAASALAWLLLWAAGLVGRLAA. 2 N-linked (GlcNAc...) asparagine glycosylation sites follow: Asn97 and Asn209. The helical transmembrane segment at 225–245 threads the bilayer; it reads VCSVTLLITVLCSTLILLAVF.

It belongs to the PIGX family. As to quaternary structure, part of the glycosylphosphatidylinositol-mannosyltransferase I complex that is composed of PIGM and PIGX. Interacts with PIGM; PIGX stabilizes PIGM.

The protein localises to the endoplasmic reticulum membrane. It functions in the pathway glycolipid biosynthesis; glycosylphosphatidylinositol-anchor biosynthesis. Its function is as follows. Stabilizing subunit of the glycosylphosphatidylinositol-mannosyltransferase I complex which catalyzes the transfer of the first mannose, via an alpha-1,4 bond from a dolichol-phosphate-mannose (Dol-P-Man) to the glucosaminyl acyl phosphatidylinositol (GlcN-(acyl)PI) intermediate to generate alpha-D-Man-(1-&gt;4)-alpha-D-GlcN-(1-&gt;6)-(1-radyl,2-acyl-sn-glycero-3-phospho)-2-acyl-inositol and participates in the sixth step of the glycosylphosphatidylinositol-anchor biosynthesis. Probably acts by stabilizing the mannosyltransferase PIGM. This chain is GPI alpha-1,4-mannosyltransferase I, stabilizing subunit, found in Rattus norvegicus (Rat).